A 270-amino-acid polypeptide reads, in one-letter code: Shikimate dehydrogenase (NADP(+)) (270 aa).

Residues 14 to 16 (SLS) and Thr-61 each bind shikimate. The active-site Proton acceptor is the Lys-65. Residue Asp-77 coordinates NADP(+). Shikimate contacts are provided by Asn-86 and Asp-101. NADP(+) is bound by residues 125–129 (GNGGA) and Ile-210. Tyr-212 serves as a coordination point for shikimate. Gly-233 is a binding site for NADP(+).

Belongs to the shikimate dehydrogenase family. As to quaternary structure, homodimer.

The enzyme catalyses shikimate + NADP(+) = 3-dehydroshikimate + NADPH + H(+). The protein operates within metabolic intermediate biosynthesis; chorismate biosynthesis; chorismate from D-erythrose 4-phosphate and phosphoenolpyruvate: step 4/7. Its function is as follows. Involved in the biosynthesis of the chorismate, which leads to the biosynthesis of aromatic amino acids. Catalyzes the reversible NADPH linked reduction of 3-dehydroshikimate (DHSA) to yield shikimate (SA). The chain is Shikimate dehydrogenase (NADP(+)) from Clostridium beijerinckii (strain ATCC 51743 / NCIMB 8052) (Clostridium acetobutylicum).